The following is a 154-amino-acid chain: 6,7-dimethyl-8-ribityllumazine synthase (154 aa).

5-amino-6-(D-ribitylamino)uracil contacts are provided by residues 22 to 23 (FN), 56 to 58 (SWE), and 80 to 82 (VLI). (2S)-2-hydroxy-3-oxobutyl phosphate is bound at residue 85–86 (AT). H88 functions as the Proton donor in the catalytic mechanism. F113 provides a ligand contact to 5-amino-6-(D-ribitylamino)uracil. R127 provides a ligand contact to (2S)-2-hydroxy-3-oxobutyl phosphate. K135 contributes to the 5-amino-6-(D-ribitylamino)uracil binding site.

Belongs to the DMRL synthase family. In terms of assembly, forms an icosahedral capsid composed of 60 subunits, arranged as a dodecamer of pentamers.

It carries out the reaction (2S)-2-hydroxy-3-oxobutyl phosphate + 5-amino-6-(D-ribitylamino)uracil = 6,7-dimethyl-8-(1-D-ribityl)lumazine + phosphate + 2 H2O + H(+). The protein operates within cofactor biosynthesis; riboflavin biosynthesis; riboflavin from 2-hydroxy-3-oxobutyl phosphate and 5-amino-6-(D-ribitylamino)uracil: step 1/2. Functionally, catalyzes the formation of 6,7-dimethyl-8-ribityllumazine by condensation of 5-amino-6-(D-ribitylamino)uracil with 3,4-dihydroxy-2-butanone 4-phosphate. This is the penultimate step in the biosynthesis of riboflavin. In Aquifex aeolicus (strain VF5), this protein is 6,7-dimethyl-8-ribityllumazine synthase (ribH).